The sequence spans 1399 residues: DNA-directed RNA polymerase subunit beta' (1399 aa).

The Zn(2+) site is built by cysteine 70, cysteine 72, cysteine 85, and cysteine 88. Residues aspartate 460, aspartate 462, and aspartate 464 each contribute to the Mg(2+) site. Residues cysteine 814, cysteine 888, cysteine 895, and cysteine 898 each coordinate Zn(2+).

Belongs to the RNA polymerase beta' chain family. The RNAP catalytic core consists of 2 alpha, 1 beta, 1 beta' and 1 omega subunit. When a sigma factor is associated with the core the holoenzyme is formed, which can initiate transcription. It depends on Mg(2+) as a cofactor. Zn(2+) is required as a cofactor.

The catalysed reaction is RNA(n) + a ribonucleoside 5'-triphosphate = RNA(n+1) + diphosphate. Its function is as follows. DNA-dependent RNA polymerase catalyzes the transcription of DNA into RNA using the four ribonucleoside triphosphates as substrates. The sequence is that of DNA-directed RNA polymerase subunit beta' from Pseudomonas putida (strain GB-1).